Here is a 163-residue protein sequence, read N- to C-terminus: Small ribosomal subunit protein bS6 (163 aa).

Residues Glu97–Ala163 are disordered. The span at Arg122–Ala163 shows a compositional bias: basic and acidic residues.

Belongs to the bacterial ribosomal protein bS6 family.

Functionally, binds together with bS18 to 16S ribosomal RNA. The chain is Small ribosomal subunit protein bS6 from Rhodospirillum centenum (strain ATCC 51521 / SW).